Consider the following 144-residue polypeptide: Large ribosomal subunit protein uL15 (144 aa).

Residues 1–53 (MRLNTLSPAVGAKSAPKRVGRGIGSGLGKTAGRGHKGQKSRSGGGVRPGFEGG) form a disordered region. 2 stretches are compositionally biased toward gly residues: residues 21–31 (RGIGSGLGKTA) and 42–52 (SGGGVRPGFEG).

It belongs to the universal ribosomal protein uL15 family. In terms of assembly, part of the 50S ribosomal subunit.

Functionally, binds to the 23S rRNA. This Shewanella amazonensis (strain ATCC BAA-1098 / SB2B) protein is Large ribosomal subunit protein uL15.